The primary structure comprises 356 residues: Tyrosine recombinase XerS (356 aa).

One can recognise a Core-binding (CB) domain in the interval 16 to 121; it reads IMPWYVLDYY…ALSSLYKYLT (106 aa). The Tyr recombinase domain occupies 169–354; that stretch reads AFLDYVDKEY…VNDEQKNALD (186 aa). Active-site residues include R210, K234, H306, R309, and H332. The O-(3'-phospho-DNA)-tyrosine intermediate role is filled by Y341.

It belongs to the 'phage' integrase family. XerS subfamily.

Its subcellular location is the cytoplasm. Its activity is regulated as follows. FtsK is required for recombination. Its function is as follows. Site-specific tyrosine recombinase, which acts by catalyzing the cutting and rejoining of the recombining DNA molecules. Essential to convert dimers of the bacterial chromosome into monomers to permit their segregation at cell division. The chain is Tyrosine recombinase XerS from Streptococcus pyogenes serotype M1.